Consider the following 239-residue polypeptide: Cell number regulator 6 (239 aa).

Over residues Met1 to Pro10 the composition is skewed to polar residues. Positions Met1 to Asn33 are disordered. The segment covering Leu16–Pro29 has biased composition (basic and acidic residues). A run of 2 helical transmembrane segments spans residues Cys107 to Phe127 and Phe136 to Phe156.

It belongs to the cornifelin family. As to expression, expressed in roots, leaves, stalks, apical meristems, immature ears, endosperm, pericarp and tassel spikelets.

The protein localises to the membrane. This is Cell number regulator 6 (CNR6) from Zea mays (Maize).